The primary structure comprises 305 residues: Homoserine kinase (305 aa).

95–105 (PHGRGLGSSSA) serves as a coordination point for ATP.

Belongs to the GHMP kinase family. Homoserine kinase subfamily.

It is found in the cytoplasm. The enzyme catalyses L-homoserine + ATP = O-phospho-L-homoserine + ADP + H(+). It participates in amino-acid biosynthesis; L-threonine biosynthesis; L-threonine from L-aspartate: step 4/5. Catalyzes the ATP-dependent phosphorylation of L-homoserine to L-homoserine phosphate. This is Homoserine kinase from Streptomyces avermitilis (strain ATCC 31267 / DSM 46492 / JCM 5070 / NBRC 14893 / NCIMB 12804 / NRRL 8165 / MA-4680).